The chain runs to 272 residues: 3-methyl-2-oxobutanoate hydroxymethyltransferase (272 aa).

Mg(2+) is bound by residues Asp-51 and Asp-90. 3-methyl-2-oxobutanoate is bound by residues 51–52 (DS), Asp-90, and Lys-118. Glu-120 provides a ligand contact to Mg(2+). Catalysis depends on Glu-187, which acts as the Proton acceptor.

Belongs to the PanB family. In terms of assembly, homodecamer; pentamer of dimers. The cofactor is Mg(2+).

It is found in the cytoplasm. The catalysed reaction is 3-methyl-2-oxobutanoate + (6R)-5,10-methylene-5,6,7,8-tetrahydrofolate + H2O = 2-dehydropantoate + (6S)-5,6,7,8-tetrahydrofolate. The protein operates within cofactor biosynthesis; (R)-pantothenate biosynthesis; (R)-pantoate from 3-methyl-2-oxobutanoate: step 1/2. Catalyzes the reversible reaction in which hydroxymethyl group from 5,10-methylenetetrahydrofolate is transferred onto alpha-ketoisovalerate to form ketopantoate. The sequence is that of 3-methyl-2-oxobutanoate hydroxymethyltransferase from Xylella fastidiosa (strain M23).